The sequence spans 129 residues: Large ribosomal subunit protein uL22 (129 aa).

Belongs to the universal ribosomal protein uL22 family. In terms of assembly, part of the 50S ribosomal subunit.

Its function is as follows. This protein binds specifically to 23S rRNA; its binding is stimulated by other ribosomal proteins, e.g. L4, L17, and L20. It is important during the early stages of 50S assembly. It makes multiple contacts with different domains of the 23S rRNA in the assembled 50S subunit and ribosome. Functionally, the globular domain of the protein is located near the polypeptide exit tunnel on the outside of the subunit, while an extended beta-hairpin is found that lines the wall of the exit tunnel in the center of the 70S ribosome. The sequence is that of Large ribosomal subunit protein uL22 from Mesorhizobium japonicum (strain LMG 29417 / CECT 9101 / MAFF 303099) (Mesorhizobium loti (strain MAFF 303099)).